The chain runs to 152 residues: Small ribosomal subunit protein uS19 (152 aa).

It belongs to the universal ribosomal protein uS19 family.

The polypeptide is Small ribosomal subunit protein uS19 (RPS15) (Podospora anserina (Pleurage anserina)).